Consider the following 458-residue polypeptide: Protein amnionless (458 aa).

Residues 1-19 (MGALGRVLLWLQLCAMTRA) form the signal peptide. Topologically, residues 20–362 (AYKLWVPNTS…ELNQSSSGAG (343 aa)) are extracellular. Asn27 carries an N-linked (GlcNAc...) asparagine glycan. 6 disulfide bridges follow: Cys43/Cys96, Cys137/Cys213, Cys205/Cys211, Cys223/Cys249, Cys234/Cys250, and Cys239/Cys253. The tract at residues 67–87 (SDMLLPLDGELVLASGAALSA) is interaction with CUBN. Residues 203–254 (QACTDASGCVCGNAEMLPWICASLLQPLGGRCPQAACQDPLLPQGQCCDLCG) form the VWFC domain. Asn355 carries N-linked (GlcNAc...) asparagine glycosylation. The helical transmembrane segment at 363–383 (LAGGVAALVLLALLGTVLLLL) threads the bilayer. Over 384-458 (HRSGRLRWRR…LFAGEAEAEA (75 aa)) the chain is Cytoplasmic.

In terms of assembly, interacts (via extracellular region) with CUBN/cubilin. This gives rise to a huge complex containing one AMN chain and three CUBN chains. In terms of processing, N-glycosylated. Post-translationally, a soluble form arises by proteolytic removal of the membrane anchor. As to expression, expressed in polarized epithelial cells which are specialized in resorption or transport, specifically kidney proximal tubules and intestinal epithelium.

It localises to the apical cell membrane. It is found in the cell membrane. The protein resides in the endosome membrane. Its subcellular location is the membrane. The protein localises to the coated pit. Its function is as follows. Membrane-bound component of the endocytic receptor formed by AMN and CUBN. Required for normal CUBN glycosylation and trafficking to the cell surface. The complex formed by AMN and CUBN is required for efficient absorption of vitamin B12. Required for normal CUBN-mediated protein transport in the kidney. The chain is Protein amnionless (Amn) from Mus musculus (Mouse).